Reading from the N-terminus, the 156-residue chain is Small ribosomal subunit protein uS7 (156 aa).

The protein belongs to the universal ribosomal protein uS7 family. Part of the 30S ribosomal subunit. Contacts proteins S9 and S11.

One of the primary rRNA binding proteins, it binds directly to 16S rRNA where it nucleates assembly of the head domain of the 30S subunit. Is located at the subunit interface close to the decoding center, probably blocks exit of the E-site tRNA. The chain is Small ribosomal subunit protein uS7 from Streptococcus mutans serotype c (strain ATCC 700610 / UA159).